Consider the following 315-residue polypeptide: FGFR1 oncogene partner 2 homolog (315 aa).

2 coiled-coil regions span residues 32–99 and 156–183; these read EEAE…RAME and VVQR…ISKQ. Disordered regions lie at residues 201–222 and 238–315; these read KAVQ…SGAS and PEQP…APAT. Over residues 246-269 the composition is skewed to polar residues; the sequence is GTTNSFNTAPVHSQSETQAPSVTL.

The protein belongs to the SIKE family.

This is FGFR1 oncogene partner 2 homolog from Drosophila melanogaster (Fruit fly).